Here is a 262-residue protein sequence, read N- to C-terminus: Flap endonuclease Xni (262 aa).

Asp105 lines the Mg(2+) pocket. Positions 162 to 257 (ERSQFLDLMA…FRVIDSPPEK (96 aa)) constitute a 5'-3' exonuclease domain. Positions 172, 173, 181, 183, and 186 each coordinate K(+). The interaction with DNA stretch occupies residues 185–190 (GIGPKS).

The protein belongs to the Xni family. It depends on Mg(2+) as a cofactor. K(+) serves as cofactor.

In terms of biological role, has flap endonuclease activity. During DNA replication, flap endonucleases cleave the 5'-overhanging flap structure that is generated by displacement synthesis when DNA polymerase encounters the 5'-end of a downstream Okazaki fragment. In Shewanella baltica (strain OS223), this protein is Flap endonuclease Xni.